Reading from the N-terminus, the 777-residue chain is Glucocorticoid receptor (777 aa).

The span at 1–14 (MDSKESLTPGKEEN) shows a compositional bias: basic and acidic residues. A disordered region spans residues 1–22 (MDSKESLTPGKEENPSSVLTQE). Residues 1–420 (MDSKESLTPG…TATTGPPPKL (420 aa)) form a modulating region. Thr-8 bears the Phosphothreonine mark. Arg-23 carries the omega-N-methylarginine modification. Residues Ser-45, Ser-113, Ser-134, and Ser-141 each carry the phosphoserine modification. Residues 130-182 (NRSTSVPENPKSSASSSVSAAPKEKEFPKTHSDVSSEQQNLKGQTGSNGGNVK) are disordered. Positions 134–150 (SVPENPKSSASSSVSAA) are enriched in low complexity. Residues 151–163 (PKEKEFPKTHSDV) are compositionally biased toward basic and acidic residues. A compositionally biased stretch (polar residues) spans 164 to 174 (SSEQQNLKGQT). A phosphoserine mark is found at Ser-203, Ser-211, and Ser-226. Lys-258 is covalently cross-linked (Glycyl lysine isopeptide (Lys-Gly) (interchain with G-Cter in SUMO2)). Residue Ser-267 is modified to Phosphoserine. Residues Lys-277 and Lys-293 each participate in a glycyl lysine isopeptide (Lys-Gly) (interchain with G-Cter in SUMO); alternate cross-link. Residues Lys-277 and Lys-293 each participate in a glycyl lysine isopeptide (Lys-Gly) (interchain with G-Cter in SUMO2); alternate cross-link. Residues 394–414 (SSPSMRPDVSSPPSSSSTATT) show a composition bias toward low complexity. The disordered stretch occupies residues 394 to 415 (SSPSMRPDVSSPPSSSSTATTG). Ser-404 carries the post-translational modification Phosphoserine. Residue Lys-419 forms a Glycyl lysine isopeptide (Lys-Gly) (interchain with G-Cter in ubiquitin) linkage. 2 NR C4-type zinc fingers span residues 421–441 (CLVC…CGSC) and 457–481 (CAGR…YRKC). Residues 421 to 486 (CLVCSDEASG…RYRKCLQAGM (66 aa)) constitute a DNA-binding region (nuclear receptor). N6-acetyllysine occurs at positions 480, 492, 494, and 495. An interaction with CLOCK region spans residues 485 to 777 (GMNLEARKTK…NIKKLLFHQK (293 aa)). The segment at 487–523 (NLEARKTKKKIKGIQQATTGVSQETSENPANKTIVPA) is hinge. One can recognise an NR LBD domain in the interval 524–758 (TLPQLTPTLV…FPEMLAEIIT (235 aa)). Residues 532 to 697 (LVSLLEVIEP…EIRMTYIKEL (166 aa)) form an interaction with CRY1 region. A Glycyl lysine isopeptide (Lys-Gly) (interchain with G-Cter in SUMO) cross-link involves residue Lys-703.

This sequence belongs to the nuclear hormone receptor family. NR3 subfamily. As to quaternary structure, heteromultimeric cytoplasmic complex with HSP90AA1, HSPA1A/HSPA1B, and FKBP5 or another immunophilin such as PPID, STIP1, or the immunophilin homolog PPP5C. Upon ligand binding FKBP5 dissociates from the complex and FKBP4 takes its place, thereby linking the complex to dynein and mediating transport to the nucleus, where the complex dissociates. Probably forms a complex composed of chaperones HSP90 and HSP70, co-chaperones CDC37, PPP5C, TSC1 and client protein TSC2, CDK4, AKT, RAF1 and NR3C1; this complex does not contain co-chaperones STIP1/HOP and PTGES3/p23. Directly interacts with UNC45A. Binds to DNA as a homodimer, and as heterodimer with NR3C2 or the retinoid X receptor. Binds STAT5A and STAT5B homodimers and heterodimers. Interacts with NRIP1, POU2F1, POU2F2 and TRIM28. Interacts with several coactivator complexes, including the SMARCA4 complex, CREBBP/EP300, TADA2L (Ada complex) and p160 coactivators such as NCOA2 and NCOA6. Interaction with BAG1 inhibits transactivation. Interacts with HEXIM1 and TGFB1I1. Interacts with NCOA1. Interacts with NCOA3, SMARCA4, SMARCC1, SMARCD1, and SMARCE1. Interacts with CLOCK, CRY1 and CRY2 in a ligand-dependent fashion. Interacts with CIART. Interacts with RWDD3. Interacts with UBE2I/UBC9 and this interaction is enhanced in the presence of RWDD3. Interacts with GRIP1. Interacts with NR4A3 (via nuclear receptor DNA-binding domain), represses transcription activity of NR4A3 on the POMC promoter Nur response element (NurRE). Directly interacts with PNRC2 to attract and form a complex with UPF1 and DCP1A; the interaction leads to rapid mRNA degradation. Interacts with GSK3B. Interacts with FNIP1 and FNIP2. Interacts (via C-terminus) with HNRNPU (via C-terminus). Interacts with MCM3AP. Interacts (via domain NR LBD) with HSP90AA1 and HSP90AB1. In the absence of hormonal ligand, interacts with TACC1. Interacts (via NR LBD domain) with ZNF764 (via KRAB domain); the interaction regulates transcription factor activity of NR3C1 by directing its actions toward certain biologic pathways. Post-translationally, acetylation by CLOCK reduces its binding to glucocorticoid response elements and its transcriptional activity. In terms of processing, increased proteasome-mediated degradation in response to glucocorticoids. Phosphorylated in the absence of hormone; becomes hyperphosphorylated in the presence of glucocorticoid. The Ser-203, Ser-226 and Ser-404-phosphorylated forms are mainly cytoplasmic, and the Ser-211-phosphorylated form is nuclear. Phosphorylation at Ser-211 increases transcriptional activity. Phosphorylation at Ser-203, Ser-226 and Ser-404 decreases signaling capacity. Phosphorylation at Ser-404 may protect from glucocorticoid-induced apoptosis. Phosphorylation at Ser-203 and Ser-211 is not required in regulation of chromosome segregation. May be dephosphorylated by PPP5C, attenuates NR3C1 action. Post-translationally, ubiquitinated by UBR5, leading to its degradation: UBR5 specifically recognizes and binds ligand-bound NR3C1 when it is not associated with coactivators (NCOAs). In presence of NCOAs, the UBR5-degron is not accessible, preventing its ubiquitination and degradation. In terms of processing, sumoylation at Lys-277 and Lys-293 negatively regulates its transcriptional activity. Sumoylation at Lys-703 positively regulates its transcriptional activity in the presence of RWDD3. Sumoylation at Lys-277 and Lys-293 is dispensable whereas sumoylation at Lys-703 is critical for the stimulatory effect of RWDD3 on its transcriptional activity. Heat shock increases sumoylation in a RWDD3-dependent manner.

The protein localises to the cytoplasm. The protein resides in the nucleus. It is found in the mitochondrion. Its subcellular location is the cytoskeleton. It localises to the spindle. The protein localises to the microtubule organizing center. The protein resides in the centrosome. It is found in the chromosome. Its subcellular location is the nucleoplasm. Its function is as follows. Receptor for glucocorticoids (GC). Has a dual mode of action: as a transcription factor that binds to glucocorticoid response elements (GRE), both for nuclear and mitochondrial DNA, and as a modulator of other transcription factors. Affects inflammatory responses, cellular proliferation and differentiation in target tissues. Involved in chromatin remodeling. Plays a role in rapid mRNA degradation by binding to the 5' UTR of target mRNAs and interacting with PNRC2 in a ligand-dependent manner which recruits the RNA helicase UPF1 and the mRNA-decapping enzyme DCP1A, leading to RNA decay. Could act as a coactivator for STAT5-dependent transcription upon growth hormone (GH) stimulation and could reveal an essential role of hepatic GR in the control of body growth. Mediates glucocorticoid-induced apoptosis. Promotes accurate chromosome segregation during mitosis. May act as a tumor suppressor. May play a negative role in adipogenesis through the regulation of lipolytic and antilipogenic gene expression. The sequence is that of Glucocorticoid receptor (NR3C1) from Saimiri boliviensis boliviensis (Bolivian squirrel monkey).